Here is a 366-residue protein sequence, read N- to C-terminus: Chorismate synthase (366 aa).

NADP(+) is bound by residues arginine 48 and arginine 54. FMN-binding positions include 125–127 (RSS), 238–239 (NA), glycine 278, 293–297 (KPTSS), and arginine 319.

This sequence belongs to the chorismate synthase family. In terms of assembly, homotetramer. It depends on FMNH2 as a cofactor.

It carries out the reaction 5-O-(1-carboxyvinyl)-3-phosphoshikimate = chorismate + phosphate. It participates in metabolic intermediate biosynthesis; chorismate biosynthesis; chorismate from D-erythrose 4-phosphate and phosphoenolpyruvate: step 7/7. In terms of biological role, catalyzes the anti-1,4-elimination of the C-3 phosphate and the C-6 proR hydrogen from 5-enolpyruvylshikimate-3-phosphate (EPSP) to yield chorismate, which is the branch point compound that serves as the starting substrate for the three terminal pathways of aromatic amino acid biosynthesis. This reaction introduces a second double bond into the aromatic ring system. This is Chorismate synthase from Methylococcus capsulatus (strain ATCC 33009 / NCIMB 11132 / Bath).